A 64-amino-acid chain; its full sequence is Large ribosomal subunit protein bL35 (64 aa).

The span at 38-53 shows a compositional bias: basic residues; that stretch reads KRKANLNAPKHVHHTN. The interval 38-64 is disordered; that stretch reads KRKANLNAPKHVHHTNAHSVMSLLCRA.

This sequence belongs to the bacterial ribosomal protein bL35 family.

The polypeptide is Large ribosomal subunit protein bL35 (Helicobacter pylori (strain G27)).